Here is an 859-residue protein sequence, read N- to C-terminus: ATP-dependent RNA helicase DDX24 (859 aa).

Lys-17 bears the N6-acetyllysine mark. Ser-60 is modified (phosphoserine). Residues 61–175 (PAKNPSSLFS…SQSTAAKVPK (115 aa)) are disordered. An N6-acetyllysine modification is found at Lys-71. 2 positions are modified to phosphoserine: Ser-82 and Ser-94. Residues 82 to 91 (SEEEEEEEGE) show a composition bias toward acidic residues. A compositionally biased stretch (basic residues) spans 95–105 (PKKKIKLKKSK). Over residues 106–115 (NVATEGTSTQ) the composition is skewed to polar residues. Positions 192–220 (SAWKDLFVPRPVLRALSFLGFSAPTPIQV) match the Q motif motif. The Helicase ATP-binding domain occupies 224 to 528 (APAIRDKLDI…RILHKKHTKK (305 aa)). 237–244 (AETGSGKT) contacts ATP. The segment at 262–374 (NAAPPPSNTE…QTGNLKQELD (113 aa)) is disordered. The span at 277–293 (TRPEAGAETRSPGKAEA) shows a compositional bias: basic and acidic residues. Residues Ser-287 and Ser-295 each carry the phosphoserine modification. Residues 294–304 (ESDALPDDTVI) show a composition bias toward acidic residues. At Thr-302 the chain carries Phosphothreonine. Lys-370 is covalently cross-linked (Glycyl lysine isopeptide (Lys-Gly) (interchain with G-Cter in SUMO2)). The DEAD box signature appears at 471–474 (DEAD). The Helicase C-terminal domain occupies 578-723 (YLYYFLMQYP…LFPVQTKYMD (146 aa)). Glycyl lysine isopeptide (Lys-Gly) (interchain with G-Cter in SUMO2) cross-links involve residues Lys-624, Lys-808, and Lys-825. Polar residues-rich tracts occupy residues 799–814 (PLFT…TQSG) and 823–834 (PSKSESALSCLS). The interval 799–859 (PLFTESQKTK…EQPQPSTSAN (61 aa)) is disordered.

This sequence belongs to the DEAD box helicase family. DDX24/MAK5 subfamily. As to quaternary structure, interacts with FADD. Interacts with RIPK1; this interaction disrupts RLR signaling activation of IFN-dependent transcription factor IRF7. Interacts with NIP7. Interacts with EP300; this interaction prevents TP53 acetylation mediated by EP300. Ubiquitinated by MDM2 without targeting DDX24 for proteasomal degradation. Instead, polyubiquitylated DDX24 promotes interaction with NIP7, a component of pre-rRNP processing complex, and associates with pre-rRNA molecules and pre-ribosomal particles.

The protein localises to the cytoplasm. Its subcellular location is the nucleus. It catalyses the reaction ATP + H2O = ADP + phosphate + H(+). Its function is as follows. ATP-dependent RNA helicase that plays a role in various aspects of RNA metabolism including pre-mRNA splicing and is thereby involved in different biological processes such as cell cycle regulation or innate immunity. Plays an inhibitory role in TP53 transcriptional activity and subsequently in TP53 controlled cell growth arrest and senescence by inhibiting its EP300 mediated acetylation. Negatively regulates cytosolic RNA-mediated innate immune signaling at least in part by affecting RIPK1/IRF7 interactions. Alternatively, possesses antiviral activity by recognizing gammaherpesvirus transcripts in the context of lytic reactivation. Plays an essential role in cell cycle regulation in vascular smooth muscle cells by interacting with and regulating FANCA (Fanconi anemia complementation group A) mRNA. This Pongo abelii (Sumatran orangutan) protein is ATP-dependent RNA helicase DDX24 (DDX24).